Reading from the N-terminus, the 42-residue chain is Perlinhibin-related protein (42 aa).

Contains four disulfide bonds.

Inhibitor of shell growth. The chain is Perlinhibin-related protein from Haliotis laevigata (Smooth Australian abalone).